The following is an 859-amino-acid chain: DNA mismatch repair protein MutS (859 aa).

618 to 625 (GPNMGGKS) lines the ATP pocket.

This sequence belongs to the DNA mismatch repair MutS family.

In terms of biological role, this protein is involved in the repair of mismatches in DNA. It is possible that it carries out the mismatch recognition step. This protein has a weak ATPase activity. This is DNA mismatch repair protein MutS from Shewanella halifaxensis (strain HAW-EB4).